The following is a 79-amino-acid chain: Beta-hexatoxin-Mg1a (79 aa).

An N-terminal signal peptide occupies residues 1–20 (MKAPATTLILVMSLISVLWA). Positions 21 to 50 (TPDLEEGDLLAELGDLIATDDEYPMKPEER) are excised as a propeptide. Cystine bridges form between Cys52-Cys66, Cys59-Cys71, and Cys65-Cys76.

The protein belongs to the neurotoxin 15 family. 01 (magi-5) subfamily. Expressed by the venom gland.

It localises to the secreted. Insect and vertebrate active toxin. Binds to site 4 of mammalian voltage-gated sodium channels and shifts the activation voltage of the mammalian Nav1.2a/SCN2A channel to more hyperpolarized voltages, whereas the insect channel, DmNav1 (para), is not affected. Competes for binding at site 3 of the insect sodium channel. Causes temporary paralysis when injected into lepidopteran larvae at 8.6 nmol/g. A low intracranial injection dose into mice causes lacrimation, closure of the eyes and sweating. A high injection dose causes extensive lacrimation and death. The protein is Beta-hexatoxin-Mg1a of Macrothele gigas (Japanese funnel web spider).